Reading from the N-terminus, the 327-residue chain is Flotillin-like protein FloA (327 aa).

The next 2 helical transmembrane spans lie at 6 to 26 and 28 to 48; these read VLFF…FTFV and IMLW…TLVG.

It belongs to the flotillin-like FloA family. Homooligomerizes.

It is found in the cell membrane. It localises to the membrane raft. In terms of biological role, found in functional membrane microdomains (FMM) that may be equivalent to eukaryotic membrane rafts. FMMs are highly dynamic and increase in number as cells age. Flotillins are thought to be important factors in membrane fluidity. This is Flotillin-like protein FloA from Priestia megaterium (strain DSM 319 / IMG 1521) (Bacillus megaterium).